A 351-amino-acid chain; its full sequence is Beta-hexosaminidase (351 aa).

Residues Asp62, Arg70, Arg134, and 164-165 (KH) contribute to the substrate site. Residue His177 is the Proton donor/acceptor of the active site. Asp249 functions as the Nucleophile in the catalytic mechanism.

Belongs to the glycosyl hydrolase 3 family. NagZ subfamily. In terms of assembly, monomer.

It localises to the cytoplasm. The catalysed reaction is Hydrolysis of terminal non-reducing N-acetyl-D-hexosamine residues in N-acetyl-beta-D-hexosaminides.. It functions in the pathway cell wall biogenesis; peptidoglycan recycling. Its function is as follows. Plays a role in peptidoglycan recycling by cleaving the terminal beta-1,4-linked N-acetylglucosamine (GlcNAc) from peptide-linked peptidoglycan fragments, giving rise to free GlcNAc, anhydro-N-acetylmuramic acid and anhydro-N-acetylmuramic acid-linked peptides. This is Beta-hexosaminidase from Pasteurella multocida (strain Pm70).